A 180-amino-acid chain; its full sequence is Signal peptidase complex subunit 2 (180 aa).

Residues 1 to 45 are Cytoplasmic-facing; that stretch reads MSDERITVVNKWDGPTVKNGLDEVVKKILNDKVGWTEQHNLMNLR. A helical membrane pass occupies residues 46 to 66; that stretch reads LLISFIGVAFSAFACGYDFYA. At 67-72 the chain is on the lumenal side; that stretch reads PFPKSK. A helical membrane pass occupies residues 73 to 93; that stretch reads IVLLVCSVSYFICMGVLQLFQ. The Cytoplasmic portion of the chain corresponds to 94-180; sequence WYVEKDCFYE…LWARLIRSEQ (87 aa).

This sequence belongs to the SPCS2 family. As to quaternary structure, component of the signal peptidase complex (SPC) composed of a catalytic subunit sec-11 and three accessory subunits spcs-1, spcs-2 and spcs-3. The complex induces a local thinning of the ER membrane which is used to measure the length of the signal peptide (SP) h-region of protein substrates. This ensures the selectivity of the complex towards h-regions shorter than 18-20 amino acids.

It localises to the endoplasmic reticulum membrane. Its function is as follows. Component of the signal peptidase complex (SPC) which catalyzes the cleavage of N-terminal signal sequences from nascent proteins as they are translocated into the lumen of the endoplasmic reticulum. Enhances the enzymatic activity of SPC and facilitates the interactions between different components of the translocation site. The protein is Signal peptidase complex subunit 2 of Caenorhabditis briggsae.